Reading from the N-terminus, the 158-residue chain is Phosphopantetheine adenylyltransferase (158 aa).

Substrate is bound at residue Thr10. Residues 10-11 and His18 contribute to the ATP site; that span reads TF. Substrate is bound by residues Lys42, Leu74, and Arg88. ATP contacts are provided by residues 89-91, Glu99, and 124-130; these read GIR and WRYLSST.

The protein belongs to the bacterial CoaD family. As to quaternary structure, homohexamer. Mg(2+) is required as a cofactor.

The protein resides in the cytoplasm. The enzyme catalyses (R)-4'-phosphopantetheine + ATP + H(+) = 3'-dephospho-CoA + diphosphate. It functions in the pathway cofactor biosynthesis; coenzyme A biosynthesis; CoA from (R)-pantothenate: step 4/5. Its function is as follows. Reversibly transfers an adenylyl group from ATP to 4'-phosphopantetheine, yielding dephospho-CoA (dPCoA) and pyrophosphate. The chain is Phosphopantetheine adenylyltransferase from Actinobacillus pleuropneumoniae serotype 3 (strain JL03).